The sequence spans 228 residues: L-ribulose-5-phosphate 4-epimerase UlaF (228 aa).

Substrate-binding positions include 26–27, 43–44, and 72–73; these read GN, SG, and SS. 3 residues coordinate Zn(2+): Asp74, His93, and His95. Catalysis depends on Asp118, which acts as the Proton donor/acceptor. His167 serves as a coordination point for Zn(2+). Tyr225 functions as the Proton donor/acceptor in the catalytic mechanism.

This sequence belongs to the aldolase class II family. AraD/FucA subfamily. It depends on Zn(2+) as a cofactor.

The catalysed reaction is L-ribulose 5-phosphate = D-xylulose 5-phosphate. It functions in the pathway cofactor degradation; L-ascorbate degradation; D-xylulose 5-phosphate from L-ascorbate: step 4/4. Its function is as follows. Catalyzes the isomerization of L-ribulose 5-phosphate to D-xylulose 5-phosphate. Is involved in the anaerobic L-ascorbate utilization. The protein is L-ribulose-5-phosphate 4-epimerase UlaF of Salmonella choleraesuis (strain SC-B67).